A 113-amino-acid chain; its full sequence is Colicin-E1* immunity protein (113 aa).

Functionally, this protein is able to protect a cell, which harbors the plasmid pKY-1 encoding colicin E1*, against colicin E1*. The protein is Colicin-E1* immunity protein (imm) of Shigella sonnei.